A 760-amino-acid chain; its full sequence is DNA-directed RNA polymerase subunit beta' (760 aa).

Residues C76, C78, C90, and C93 each coordinate Zn(2+). Residues D594, D596, and D598 each coordinate Mg(2+).

The protein belongs to the RNA polymerase beta' chain family. RpoC1 subfamily. As to quaternary structure, in plastids the minimal PEP RNA polymerase catalytic core is composed of four subunits: alpha, beta, beta', and beta''. When a (nuclear-encoded) sigma factor is associated with the core the holoenzyme is formed, which can initiate transcription. Mg(2+) serves as cofactor. The cofactor is Zn(2+).

It localises to the plastid. It is found in the chloroplast. It carries out the reaction RNA(n) + a ribonucleoside 5'-triphosphate = RNA(n+1) + diphosphate. DNA-dependent RNA polymerase catalyzes the transcription of DNA into RNA using the four ribonucleoside triphosphates as substrates. The sequence is that of DNA-directed RNA polymerase subunit beta' from Bigelowiella natans (Pedinomonas minutissima).